The chain runs to 88 residues: MAELNLKGNRRVLTGVVVSDKADKTIVVRCETLVKHSLYKKYIRRHTKFMAHDPSNECGIGDKVQIVEFRPLSRRKRWHLDKILEKAV.

The protein belongs to the universal ribosomal protein uS17 family. Part of the 30S ribosomal subunit.

One of the primary rRNA binding proteins, it binds specifically to the 5'-end of 16S ribosomal RNA. This Maridesulfovibrio salexigens (strain ATCC 14822 / DSM 2638 / NCIMB 8403 / VKM B-1763) (Desulfovibrio salexigens) protein is Small ribosomal subunit protein uS17.